The sequence spans 113 residues: Gonadotropin subunit beta (113 aa).

6 disulfide bridges follow: C6–C54, C20–C69, C23–C107, C31–C85, C35–C87, and C90–C97. Residue N10 is glycosylated (N-linked (GlcNAc...) asparagine).

It belongs to the glycoprotein hormones subunit beta family. In terms of assembly, heterodimer of an alpha and a beta chain.

It localises to the secreted. Involved in gametogenesis and steroidogenesis. This chain is Gonadotropin subunit beta (cgb), found in Muraenesox cinereus (Daggertooth pike conger).